Here is a 23-residue protein sequence, read N- to C-terminus: Prolamin alpha-3 (23 aa).

This Dactylis glomerata (Orchard grass) protein is Prolamin alpha-3.